Here is a 273-residue protein sequence, read N- to C-terminus: Gamma-glutamyl cyclotransferase gliK (273 aa).

The helical transmembrane segment at 227-243 (WLGWIILTLYGLMWSYH) threads the bilayer.

This sequence belongs to the class-I pyridoxal-phosphate-dependent aminotransferase family.

It is found in the membrane. The enzyme catalyses an alpha-(gamma-L-glutamyl)-L-amino acid = 5-oxo-L-proline + an L-alpha-amino acid. Its pathway is mycotoxin biosynthesis. Functionally, gamma-glutamyl cyclotransferase-like protein; part of the gene cluster that mediates the biosynthesis of gliotoxin, a member of the epipolythiodioxopiperazine (ETP) class of toxins characterized by a disulfide bridged cyclic dipeptide. The first step in gliotoxin biosynthesis is the condensation of serine and phenylalanine to form the cyclo-L-phenylalanyl-L-serine diketopiperazine (DKP) by the NRPS gliP. GliP is also able to produce the DKP cyclo-L-tryptophanyl-L-serine, suggesting that the substrate specificity of the first adenylation (A) domain in gliP is sufficiently relaxed to accommodate both L-Phe and L-Trp. The cytochrome P450 monooxygenase gliC has been shown to catalyze the subsequent hydroxylation of the alpha-carbon of L-Phe in cyclo-L-phenylalanyl-L-serine whereas the second cytochrome P450 enzyme, gliF, is presumably involved in the modification of the DKP side chain. The glutathione S-transferase (GST) gliG then forms a bis-glutathionylated biosynthetic intermediate which is responsible for the sulfurization of gliotoxin. This bis-glutathionylated intermediate is subsequently processed by the gamma-glutamyl cyclotransferase gliK to remove both gamma-glutamyl moieties. Subsequent processing via gliI yields a biosynthetic intermediate, which is N-methylated via the N-methyltransferase gliN, before the gliotoxin oxidoreductase gliT-mediated disulfide bridge closure. GliN-mediated amide methylation confers stability to ETP, damping the spontaneous formation of tri- and tetrasulfides. Intracellular dithiol gliotoxin oxidized by gliT is subsequently effluxed by gliA. Gliotoxin contributes to pathogenesis during invasive aspergillosis. In macrophages and neutrophils, gliotoxin showed inhibition of various different cell functions including cytokine production, antigen presentation, phagocytosis, and production of reactive oxygen species. This chain is Gamma-glutamyl cyclotransferase gliK, found in Aspergillus fumigatus (strain ATCC MYA-4609 / CBS 101355 / FGSC A1100 / Af293) (Neosartorya fumigata).